Reading from the N-terminus, the 302-residue chain is Oxygen-dependent coproporphyrinogen-III oxidase (302 aa).

Ser94 provides a ligand contact to substrate. 2 residues coordinate a divalent metal cation: His98 and His108. His108 functions as the Proton donor in the catalytic mechanism. Position 110-112 (Asn110–Arg112) interacts with substrate. A divalent metal cation is bound by residues His147 and His177. Residues Tyr242–Gln277 form an important for dimerization region. A substrate-binding site is contributed by Gly260–Arg262.

The protein belongs to the aerobic coproporphyrinogen-III oxidase family. In terms of assembly, homodimer. A divalent metal cation is required as a cofactor.

Its subcellular location is the cytoplasm. The catalysed reaction is coproporphyrinogen III + O2 + 2 H(+) = protoporphyrinogen IX + 2 CO2 + 2 H2O. The protein operates within porphyrin-containing compound metabolism; protoporphyrin-IX biosynthesis; protoporphyrinogen-IX from coproporphyrinogen-III (O2 route): step 1/1. Involved in the heme biosynthesis. Catalyzes the aerobic oxidative decarboxylation of propionate groups of rings A and B of coproporphyrinogen-III to yield the vinyl groups in protoporphyrinogen-IX. This chain is Oxygen-dependent coproporphyrinogen-III oxidase, found in Shewanella baltica (strain OS155 / ATCC BAA-1091).